Reading from the N-terminus, the 189-residue chain is GTP cyclohydrolase 1 (189 aa).

Zn(2+) contacts are provided by Cys78, His81, and Cys150.

The protein belongs to the GTP cyclohydrolase I family. As to quaternary structure, toroid-shaped homodecamer, composed of two pentamers of five dimers.

It carries out the reaction GTP + H2O = 7,8-dihydroneopterin 3'-triphosphate + formate + H(+). The protein operates within cofactor biosynthesis; 7,8-dihydroneopterin triphosphate biosynthesis; 7,8-dihydroneopterin triphosphate from GTP: step 1/1. The protein is GTP cyclohydrolase 1 of Listeria innocua serovar 6a (strain ATCC BAA-680 / CLIP 11262).